Consider the following 284-residue polypeptide: Probable endonuclease 4 (284 aa).

The Zn(2+) site is built by histidine 69, histidine 109, glutamate 145, aspartate 179, histidine 182, histidine 216, aspartate 229, histidine 231, and glutamate 261.

It belongs to the AP endonuclease 2 family. It depends on Zn(2+) as a cofactor.

The catalysed reaction is Endonucleolytic cleavage to 5'-phosphooligonucleotide end-products.. In terms of biological role, endonuclease IV plays a role in DNA repair. It cleaves phosphodiester bonds at apurinic or apyrimidinic (AP) sites, generating a 3'-hydroxyl group and a 5'-terminal sugar phosphate. In Chlorobium phaeobacteroides (strain BS1), this protein is Probable endonuclease 4.